We begin with the raw amino-acid sequence, 162 residues long: uncharacterized protein (162 aa).

Residues 129–161 are a coiled coil; it reads DLNAVLKNLKEVEKKSLKISKEELKKKLDQILG.

This is an uncharacterized protein from Aquifex aeolicus (strain VF5).